The sequence spans 293 residues: Deubiquitinase OTUD6B (293 aa).

M1 is modified (N-acetylmethionine). The region spanning L147–L284 is the OTU domain. The interval I152–C158 is cys-loop. The active site involves D155. C158 serves as the catalytic Nucleophile. The variable-loop stretch occupies residues I219 to L229. A his-loop region spans residues Y267–H277. H277 is a catalytic residue.

In terms of assembly, interacts with the eukaryotic translation initiation factor 4F complex.

It carries out the reaction Thiol-dependent hydrolysis of ester, thioester, amide, peptide and isopeptide bonds formed by the C-terminal Gly of ubiquitin (a 76-residue protein attached to proteins as an intracellular targeting signal).. Its function is as follows. Deubiquitinating enzyme that may play a role in the ubiquitin-dependent regulation of protein synthesis, downstream of mTORC1. May associate with the protein synthesis initiation complex and modify its ubiquitination to repress translation. May also repress DNA synthesis and modify different cellular targets thereby regulating cell growth and proliferation. May also play a role in proteasome assembly and function. Functionally, stimulates protein synthesis. Influences the expression of CCND1/cyclin D1 by promoting its translation and regulates MYC/c-Myc protein stability. This chain is Deubiquitinase OTUD6B, found in Homo sapiens (Human).